A 100-amino-acid chain; its full sequence is Urease subunit gamma (100 aa).

This sequence belongs to the urease gamma subunit family. In terms of assembly, heterotrimer of UreA (gamma), UreB (beta) and UreC (alpha) subunits. Three heterotrimers associate to form the active enzyme.

The protein localises to the cytoplasm. It carries out the reaction urea + 2 H2O + H(+) = hydrogencarbonate + 2 NH4(+). Its pathway is nitrogen metabolism; urea degradation; CO(2) and NH(3) from urea (urease route): step 1/1. This chain is Urease subunit gamma, found in Alkalilimnicola ehrlichii (strain ATCC BAA-1101 / DSM 17681 / MLHE-1).